A 542-amino-acid polypeptide reads, in one-letter code: Chaperonin GroEL 1 (542 aa).

ATP contacts are provided by residues 29–32, 86–90, glycine 415, 479–481, and aspartate 495; these read TIGP, DGTTT, and NAA.

Belongs to the chaperonin (HSP60) family. As to quaternary structure, forms a cylinder of 14 subunits composed of two heptameric rings stacked back-to-back. Interacts with the co-chaperonin GroES.

Its subcellular location is the cytoplasm. The enzyme catalyses ATP + H2O + a folded polypeptide = ADP + phosphate + an unfolded polypeptide.. Its function is as follows. Together with its co-chaperonin GroES, plays an essential role in assisting protein folding. The GroEL-GroES system forms a nano-cage that allows encapsulation of the non-native substrate proteins and provides a physical environment optimized to promote and accelerate protein folding. In Streptomyces avermitilis (strain ATCC 31267 / DSM 46492 / JCM 5070 / NBRC 14893 / NCIMB 12804 / NRRL 8165 / MA-4680), this protein is Chaperonin GroEL 1.